Consider the following 127-residue polypeptide: MSYRKLQRTSSQRRALLRDLTTSLILNGRIETTEARAKEVRKTADQMITLGKQGDLHARRQAAAFIRNVVADVKEDGDDVVVTSALQKVFSELAPKYADRKGGYTRIMKTMPRRGDGAAMAILEFVD.

The protein belongs to the bacterial ribosomal protein bL17 family. Part of the 50S ribosomal subunit. Contacts protein L32.

The sequence is that of Large ribosomal subunit protein bL17 from Levilactobacillus brevis (strain ATCC 367 / BCRC 12310 / CIP 105137 / JCM 1170 / LMG 11437 / NCIMB 947 / NCTC 947) (Lactobacillus brevis).